The following is a 594-amino-acid chain: Potassium-transporting ATPase potassium-binding subunit (594 aa).

Transmembrane regions (helical) follow at residues 3-23 (ADFL…APLL), 67-87 (AVAM…LQRL), 136-156 (ALTV…IALV), 179-199 (LYVL…QGVV), 287-307 (LEML…GEMV), 314-334 (VAIL…AAYF), 415-435 (GLYG…LMIG), 453-473 (VALV…VAVL), 519-539 (VLLG…ILAL), and 562-582 (LFVA…YVPA).

It belongs to the KdpA family. In terms of assembly, the system is composed of three essential subunits: KdpA, KdpB and KdpC.

It is found in the cell inner membrane. Its function is as follows. Part of the high-affinity ATP-driven potassium transport (or Kdp) system, which catalyzes the hydrolysis of ATP coupled with the electrogenic transport of potassium into the cytoplasm. This subunit binds the periplasmic potassium ions and delivers the ions to the membrane domain of KdpB through an intramembrane tunnel. The sequence is that of Potassium-transporting ATPase potassium-binding subunit from Bordetella bronchiseptica (strain ATCC BAA-588 / NCTC 13252 / RB50) (Alcaligenes bronchisepticus).